An 814-amino-acid polypeptide reads, in one-letter code: DNA ligase (814 aa).

Residues 46–50, 95–96, and Glu-129 contribute to the NAD(+) site; these read DAEYD and SL. Residue Lys-131 is the N6-AMP-lysine intermediate of the active site. NAD(+)-binding residues include Arg-152, Glu-189, Lys-305, and Lys-329. Zn(2+) contacts are provided by Cys-434, Cys-437, Cys-458, and Cys-464. The disordered stretch occupies residues 526 to 549; the sequence is SAQRRTEGEPAPKKPTKKKGEEED. The 80-residue stretch at 735-814 folds into the BRCT domain; that stretch reads TSAAAFAGKT…DDWLAMLAEA (80 aa).

The protein belongs to the NAD-dependent DNA ligase family. LigA subfamily. Mg(2+) serves as cofactor. It depends on Mn(2+) as a cofactor.

The enzyme catalyses NAD(+) + (deoxyribonucleotide)n-3'-hydroxyl + 5'-phospho-(deoxyribonucleotide)m = (deoxyribonucleotide)n+m + AMP + beta-nicotinamide D-nucleotide.. Its function is as follows. DNA ligase that catalyzes the formation of phosphodiester linkages between 5'-phosphoryl and 3'-hydroxyl groups in double-stranded DNA using NAD as a coenzyme and as the energy source for the reaction. It is essential for DNA replication and repair of damaged DNA. This is DNA ligase from Methylorubrum extorquens (strain CM4 / NCIMB 13688) (Methylobacterium extorquens).